The primary structure comprises 429 residues: Histidine--tRNA ligase (429 aa).

This sequence belongs to the class-II aminoacyl-tRNA synthetase family. As to quaternary structure, homodimer.

It localises to the cytoplasm. The catalysed reaction is tRNA(His) + L-histidine + ATP = L-histidyl-tRNA(His) + AMP + diphosphate + H(+). The sequence is that of Histidine--tRNA ligase from Rippkaea orientalis (strain PCC 8801 / RF-1) (Cyanothece sp. (strain PCC 8801)).